Here is a 301-residue protein sequence, read N- to C-terminus: Ribonuclease Z (301 aa).

Zn(2+) contacts are provided by H61, H63, D65, H66, H140, D211, and H269. The Proton acceptor role is filled by D65.

Belongs to the RNase Z family. In terms of assembly, homodimer. Zn(2+) is required as a cofactor.

The catalysed reaction is Endonucleolytic cleavage of RNA, removing extra 3' nucleotides from tRNA precursor, generating 3' termini of tRNAs. A 3'-hydroxy group is left at the tRNA terminus and a 5'-phosphoryl group is left at the trailer molecule.. Its function is as follows. Zinc phosphodiesterase, which displays some tRNA 3'-processing endonuclease activity. Probably involved in tRNA maturation, by removing a 3'-trailer from precursor tRNA. This is Ribonuclease Z from Bradyrhizobium sp. (strain ORS 278).